A 332-amino-acid chain; its full sequence is Long form salivary protein D7L2 (332 aa).

The N-terminal stretch at 1–21 is a signal peptide; that stretch reads MFPPRKFLLSSFILAALHVTA. 2 disulfides stabilise this stretch: Cys40/Cys77 and Cys73/Cys133. Trp61 provides a ligand contact to leukotriene E4. The leukotriene E4 site is built by Gly157 and Lys176. Disulfide bonds link Cys184–Cys219, Cys200–Cys331, and Cys259–Cys278. Residues Glu185, Arg203, and His216 each coordinate noradrenaline. Noradrenaline-binding residues include Asp294 and Glu297.

Belongs to the PBP/GOBP family. Interacts with human CD4. As to expression, saliva (at protein level). Female salivary gland (at protein level). Detected in the head and thorax of the female mosquitoes, where the salivary glands are located.

Its subcellular location is the secreted. Modulates blood feeding of female mosquitoes on vertebrate species by binding and sequestering different mediators involved in the host response, such as biogenic amines and eicosanoids. Binds serotonin, histamine, tryptamine, noradrenaline, leukotriene B4, leukotriene C4, leukotriene D4, leukotriene E4 and U-46619, a stable analog of thromboxane A2. Does not bind adrenaline. Exhibits vasodilating activity. Inhibits agonist-induced platelet aggregation but not blood clotting. In terms of biological role, (Microbial infection) Probably promotes Plasmodium gallinaceum oocyst development in mosquito midgut. The sequence is that of Long form salivary protein D7L2 from Aedes aegypti (Yellowfever mosquito).